The chain runs to 648 residues: Biosynthetic arginine decarboxylase (648 aa).

Position 109 is an N6-(pyridoxal phosphate)lysine (Lys-109). 291–301 (IDVGGGLGIDF) contacts substrate.

Belongs to the Orn/Lys/Arg decarboxylase class-II family. SpeA subfamily. Mg(2+) is required as a cofactor. It depends on pyridoxal 5'-phosphate as a cofactor.

It carries out the reaction L-arginine + H(+) = agmatine + CO2. It functions in the pathway amine and polyamine biosynthesis; agmatine biosynthesis; agmatine from L-arginine: step 1/1. Its function is as follows. Catalyzes the biosynthesis of agmatine from arginine. This Prochlorococcus marinus (strain MIT 9301) protein is Biosynthetic arginine decarboxylase.